Consider the following 574-residue polypeptide: MEVPPQKSAPGSALSTARVLGGIQRPRHLSGFGFGSDGLLGSPERAASSSPVTTLTQTMYNLAGLGSETPKTQVGSLSFQNRLTDLSLSRRTSECSLSSESSESSDAGLCMDSPSPMDPQTAERTFEQAIQAASRVIQKMQFTIKASVFASEAAGHSPVLQNITNSQALDSWEKDEAGYRAASSPGEDKENDGYIFKMPQKLPHSSSARALAEWASRREAFTQRPSSAPDLMCLTTDGKMDVEEASPVAQSSSLTPVERACEEDDGFVDILESDLKDDDMVPAGMENLISAPLVKKLDKEEEQDLIMFSKCQRLFRSPSMPCSVIRPILKRLERPHDRDVPVLSKRRKSGTPLEEQQLEEPKARVFRSKSLCHEIESILDSDHRGLIGDYSKAFLLQTVDGKHQDLKYISPETMVALLTGKFSNIVEKFVIVDCRYPYEYEGGHIKNAVNLPLEPDAETFLLKHPITPCNLDKRIILIFHCEFSSERGPRMCRFIRERDRAANDYPSLYYPEMYILKGGYKEFFPQHPNFCEPQDYRPMNHAAFRDELRNFRLKTRSWAGERSTTQLCSRLQDQ.

Disordered stretches follow at residues 31–51 (GFGF…SSSP) and 90–110 (RRTS…AGLC). The residue at position 42 (Ser42) is a Phosphoserine. Positions 90 to 105 (RRTSECSLSSESSESS) are enriched in low complexity. A Phosphoserine; by MELK modification is found at Ser166. The residue at position 246 (Ser246) is a Phosphoserine. Position 319 is a phosphoserine; by MAPKAPK2 and MELK (Ser319). The residue at position 319 (Ser319) is a Phosphoserine; by MELK and MAPK14. The segment at 339 to 359 (DVPVLSKRRKSGTPLEEQQLE) is disordered. At Ser349 the chain carries Phosphoserine; by AURKA. At Ser370 the chain carries Phosphoserine; by BRSK1 and MAPK14. Residues 425 to 532 (IVEKFVIVDC…FFPQHPNFCE (108 aa)) form the Rhodanese domain. Cys481 is a catalytic residue. Ser557 carries the phosphoserine modification.

This sequence belongs to the MPI phosphatase family. As to quaternary structure, interacts with MAPK14 and 14-3-3 proteins. Phosphorylated by BRSK1 in vitro. Phosphorylated by CHEK1, which inhibits the activity of this protein. Phosphorylation at Ser-349 by AURKA might locally participate in the control of the onset of mitosis. Phosphorylation by MELK at Ser-166 promotes localization to the centrosome and the spindle poles during mitosis. Phosphorylation at Ser-319 and Ser-370 by MAPK14 is required for binding to 14-3-3 proteins.

The protein localises to the cytoplasm. The protein resides in the cytoskeleton. It localises to the microtubule organizing center. Its subcellular location is the centrosome. It is found in the spindle pole. The catalysed reaction is O-phospho-L-tyrosyl-[protein] + H2O = L-tyrosyl-[protein] + phosphate. With respect to regulation, stimulated by B-type cyclins. In terms of biological role, tyrosine protein phosphatase which functions as a dosage-dependent inducer of mitotic progression. Directly dephosphorylates CDK1 and stimulates its kinase activity. Required for G2/M phases of the cell cycle progression and abscission during cytokinesis in a ECT2-dependent manner. The three isoforms seem to have a different level of activity. The protein is M-phase inducer phosphatase 2 (Cdc25b) of Rattus norvegicus (Rat).